Consider the following 147-residue polypeptide: Sec-independent protein translocase protein TatB (147 aa).

The chain crosses the membrane as a helical span at residues 2–22 (FDGIGFMELLLIGVLGLVVLG). The segment at 68–147 (ESKGLSNLSP…DTRSNPKANG (80 aa)) is disordered. Positions 71–97 (GLSNLSPELQESIDQLKQAAQSVNRPY) are enriched in polar residues. Low complexity predominate over residues 112-133 (PASQSVSSEASPTASSAPTSEP).

It belongs to the TatB family. As to quaternary structure, the Tat system comprises two distinct complexes: a TatABC complex, containing multiple copies of TatA, TatB and TatC subunits, and a separate TatA complex, containing only TatA subunits. Substrates initially bind to the TatABC complex, which probably triggers association of the separate TatA complex to form the active translocon.

It localises to the cell inner membrane. Functionally, part of the twin-arginine translocation (Tat) system that transports large folded proteins containing a characteristic twin-arginine motif in their signal peptide across membranes. Together with TatC, TatB is part of a receptor directly interacting with Tat signal peptides. TatB may form an oligomeric binding site that transiently accommodates folded Tat precursor proteins before their translocation. The sequence is that of Sec-independent protein translocase protein TatB from Shewanella sp. (strain MR-4).